A 180-amino-acid polypeptide reads, in one-letter code: Segregation and condensation protein B (180 aa).

It belongs to the ScpB family. Homodimer. Homodimerization may be required to stabilize the binding of ScpA to the Smc head domains. Component of a cohesin-like complex composed of ScpA, ScpB and the Smc homodimer, in which ScpA and ScpB bind to the head domain of Smc. The presence of the three proteins is required for the association of the complex with DNA.

It is found in the cytoplasm. In terms of biological role, participates in chromosomal partition during cell division. May act via the formation of a condensin-like complex containing Smc and ScpA that pull DNA away from mid-cell into both cell halves. The protein is Segregation and condensation protein B of Staphylococcus epidermidis (strain ATCC 35984 / DSM 28319 / BCRC 17069 / CCUG 31568 / BM 3577 / RP62A).